The chain runs to 306 residues: Probable cobalamin biosynthesis protein CobD (306 aa).

6 helical membrane-spanning segments follow: residues 17–37 (IGEP…IIFF), 54–74 (LFGF…AYEI), 88–108 (ISLY…IEFS), 155–175 (ITDS…PGAF), 207–227 (ILNF…APFY), and 286–306 (SLKA…VLLM).

This sequence belongs to the CobD/CbiB family.

The protein resides in the cell membrane. Its pathway is cofactor biosynthesis; adenosylcobalamin biosynthesis. Functionally, converts cobyric acid to cobinamide by the addition of aminopropanol on the F carboxylic group. The chain is Probable cobalamin biosynthesis protein CobD from Methanococcus maripaludis (strain C5 / ATCC BAA-1333).